A 314-amino-acid polypeptide reads, in one-letter code: ADP-L-glycero-D-manno-heptose-6-epimerase (314 aa).

Residues 10–11 (MI), 31–32 (DH), K38, R53, 75–79 (EGACS), and N92 each bind NADP(+). Y139 serves as the catalytic Proton acceptor. NADP(+) is bound at residue K143. N174 contacts substrate. 2 residues coordinate NADP(+): V175 and K183. The active-site Proton acceptor is the K183. Substrate-binding positions include S185, H192, 206–209 (FAGS), R214, and Y277.

This sequence belongs to the NAD(P)-dependent epimerase/dehydratase family. HldD subfamily. As to quaternary structure, homopentamer. NADP(+) serves as cofactor.

It carries out the reaction ADP-D-glycero-beta-D-manno-heptose = ADP-L-glycero-beta-D-manno-heptose. It functions in the pathway nucleotide-sugar biosynthesis; ADP-L-glycero-beta-D-manno-heptose biosynthesis; ADP-L-glycero-beta-D-manno-heptose from D-glycero-beta-D-manno-heptose 7-phosphate: step 4/4. In terms of biological role, catalyzes the interconversion between ADP-D-glycero-beta-D-manno-heptose and ADP-L-glycero-beta-D-manno-heptose via an epimerization at carbon 6 of the heptose. The chain is ADP-L-glycero-D-manno-heptose-6-epimerase from Vibrio cholerae serotype O1 (strain ATCC 39541 / Classical Ogawa 395 / O395).